A 535-amino-acid chain; its full sequence is T-complex protein 1 subunit zeta 1 (535 aa).

Belongs to the TCP-1 chaperonin family. As to quaternary structure, heterooligomeric complex of about 850 to 900 kDa that forms two stacked rings, 12 to 16 nm in diameter.

It localises to the cytoplasm. Functionally, molecular chaperone; assists the folding of proteins upon ATP hydrolysis. Known to play a role, in vitro, in the folding of actin and tubulin. In Arabidopsis thaliana (Mouse-ear cress), this protein is T-complex protein 1 subunit zeta 1.